Here is an 82-residue protein sequence, read N- to C-terminus: UPF0180 protein BALH_1248 (82 aa).

This sequence belongs to the UPF0180 family.

This Bacillus thuringiensis (strain Al Hakam) protein is UPF0180 protein BALH_1248.